A 417-amino-acid chain; its full sequence is MAEIKNYCLNFGPQHPAAHGVLRLVLELDGEVVQRADPHIGLLHRATEKLAEHKTYIQSLPYMDRLDYVSMMCNEHAYCLALEKLLGLPVPLRAQYIRVLFAEITRLLNHLMWLGSHANDCGSSTMLMYTFREREDLFDMYEAVSGARMHAAYFRPGGVYRDLPDSMPRYQASKIRNARALAALNQNRQGSLLDFIADFAQRFPGCVDEYETLLTDNRIWKQRTVGIGVVSPQRALNLGMTGPMLRGSGIAWDLRKTQPYDVYEHMDFDVPVGKTGDCYDRYLVRVQEMREANRIIGQCVAWLRANPGPVITDNHKVAAPGRAAMKSNMEELIHHFKLFTEGFHVPEGEAYAAVEHPKGEFGIYLVSDGANKPYRLKIRAPGFAHLATLDEMARGHMIADAVAIIGTMDIVFGEIDR.

Belongs to the complex I 49 kDa subunit family. NDH-1 is composed of 14 different subunits. Subunits NuoB, C, D, E, F, and G constitute the peripheral sector of the complex.

It localises to the cell inner membrane. It carries out the reaction a quinone + NADH + 5 H(+)(in) = a quinol + NAD(+) + 4 H(+)(out). Functionally, NDH-1 shuttles electrons from NADH, via FMN and iron-sulfur (Fe-S) centers, to quinones in the respiratory chain. The immediate electron acceptor for the enzyme in this species is believed to be ubiquinone. Couples the redox reaction to proton translocation (for every two electrons transferred, four hydrogen ions are translocated across the cytoplasmic membrane), and thus conserves the redox energy in a proton gradient. The chain is NADH-quinone oxidoreductase subunit D from Verminephrobacter eiseniae (strain EF01-2).